We begin with the raw amino-acid sequence, 377 residues long: Trichodiene synthase (377 aa).

It belongs to the trichodiene synthase family.

It catalyses the reaction (2E,6E)-farnesyl diphosphate = trichodiene + diphosphate. It participates in sesquiterpene biosynthesis; trichothecene biosynthesis. In terms of biological role, TS is a member of the terpene cyclase group of enzymes. It catalyzes the isomerization and cyclization of farnesyl pyro-phosphate to form trichodiene, the first cyclic intermediate in the biosynthetic pathway for trichothecenes. It serves to branch trichothecene biosynthesis from the isoprenoid pathway. This Fusarium poae protein is Trichodiene synthase (TRI5).